The sequence spans 190 residues: Elongation factor P-like protein (190 aa).

It belongs to the elongation factor P family.

This chain is Elongation factor P-like protein, found in Klebsiella pneumoniae (strain 342).